Reading from the N-terminus, the 107-residue chain is BolA-like protein 3 (107 aa).

Belongs to the BolA/IbaG family. As to quaternary structure, interacts with NFU1. In terms of tissue distribution, widely expressed.

The protein resides in the mitochondrion. In terms of biological role, acts as a mitochondrial iron-sulfur (Fe-S) cluster assembly factor that facilitates (Fe-S) cluster insertion into a subset of mitochondrial proteins. Probably acts together with NFU1. This is BolA-like protein 3 from Homo sapiens (Human).